Here is a 244-residue protein sequence, read N- to C-terminus: 5-oxoprolinase subunit A (244 aa).

Belongs to the LamB/PxpA family. As to quaternary structure, forms a complex composed of PxpA, PxpB and PxpC.

It carries out the reaction 5-oxo-L-proline + ATP + 2 H2O = L-glutamate + ADP + phosphate + H(+). Catalyzes the cleavage of 5-oxoproline to form L-glutamate coupled to the hydrolysis of ATP to ADP and inorganic phosphate. This is 5-oxoprolinase subunit A from Citrobacter koseri (strain ATCC BAA-895 / CDC 4225-83 / SGSC4696).